A 524-amino-acid chain; its full sequence is REH2-associated factor 1 (524 aa).

The transit peptide at 1–22 (MRRWLVASMAPQLHQLLQPVRR) directs the protein to the mitochondrion. The segment at 48 to 70 (ASCPACSRVVHMCDMLTHLITAH) adopts a C2H2-type 1; atypical zinc-finger fold. Residues 121–147 (YMCNWCDRRSDVYATRDKFLKHVADVH) form a C2H2-type 2; atypical zinc finger. A C2H2-type 4 zinc finger spans residues 226-249 (FPCELCNRTFNSEIDLLQHLETRH). A C2H2-type 3; atypical zinc finger spans residues 286 to 312 (VICDLCVSSSKVYKMPSALFSHIRFKH). 4 consecutive C2H2-type zinc fingers follow at residues 334-357 (FVCT…NSKH), 376-399 (WWCH…QNKH), 406-429 (HPCP…SLQH), and 443-465 (VKCS…AVKH). The disordered stretch occupies residues 463 to 524 (VKHHKKDPRA…KTTEVSEVTS (62 aa)). Positions 479–500 (APTSASHVAASTSAAVPSEVEA) are enriched in low complexity.

As to quaternary structure, component of the REH2-associated complex (REH2C) composed of helicase REH2, associated factors H2F1 and H2F2, and mRNAs at various editing stages; the formation of the complex is RNA-independent. Within the complex, interacts with REH2; the interaction is direct. Interacts with various editing complexes including the RNA editing core (RECC) complex, the gRNA-binding (GRBC) complex (also known as the MRB1 complex) and the RNA editing mediator (REMC) complex.

Its subcellular location is the mitochondrion. Plays an important role in mitochondrial mRNA editing by promoting the assembly of the mRNA editosome. Facilitates the recruitment of mRNA to the REH2C complex and promotes the interaction between various editing complexes including REH2C, GRBC, REMC and RECC complexes. The sequence is that of REH2-associated factor 1 from Trypanosoma brucei brucei (strain 927/4 GUTat10.1).